The chain runs to 201 residues: MSDMTNAGNELEPRLITETGLDQRLADIIEPVLIGIGFRLIRVRMLNQNGVTMQVMAERNDGTMTVQDCEEVSMAISPVLDVEDPVDKEYHLEVSSPGIDRPMVRKSDFVRWQGHLVKCETSILIDNRKRFRGKIVEAGVDGFTLERDQVAYGEEQKVTIPFTALSDAKLILTDDLIRDALRADKLAKAEAANQNEADDQE.

Belongs to the RimP family.

It is found in the cytoplasm. Required for maturation of 30S ribosomal subunits. This chain is Ribosome maturation factor RimP, found in Rhizobium leguminosarum bv. trifolii (strain WSM2304).